Here is a 363-residue protein sequence, read N- to C-terminus: Sensor protein BasS (363 aa).

Residues 1–13 (MHFLRRPISLRQR) lie on the Cytoplasmic side of the membrane. Residues 14–34 (LILTIGAILLVFELISVFWLW) traverse the membrane as a helical segment. Residues 35–64 (HESTEQIQLFEQALRDNRNNDRHIMREIRE) lie on the Periplasmic side of the membrane. A helical membrane pass occupies residues 65–88 (AVASLIVPGVFMVSLTLFICYQAV). The 53-residue stretch at 89–141 (RRITRPLAELQKELEARTADNLTPIAIHSATLEIEAVVSALNDLVSRLTSTLD) folds into the HAMP domain. The Cytoplasmic portion of the chain corresponds to 89–363 (RRITRPLAEL…KKDQYVANQI (275 aa)). Residues 149–357 (DVAHELRTPL…RAWVRLKKDQ (209 aa)) enclose the Histidine kinase domain. A Phosphohistidine; by autocatalysis modification is found at His152.

In terms of processing, autophosphorylated.

The protein resides in the cell inner membrane. The catalysed reaction is ATP + protein L-histidine = ADP + protein N-phospho-L-histidine.. Functionally, member of the two-component regulatory system BasS/BasR Autophosphorylates and activates BasR by phosphorylation. In Escherichia coli (strain K12), this protein is Sensor protein BasS (basS).